The following is a 434-amino-acid chain: Methylenetetrahydrofolate--tRNA-(uracil-5-)-methyltransferase TrmFO (434 aa).

Residue 10–15 (GAGLAG) coordinates FAD.

This sequence belongs to the MnmG family. TrmFO subfamily. Requires FAD as cofactor.

Its subcellular location is the cytoplasm. The catalysed reaction is uridine(54) in tRNA + (6R)-5,10-methylene-5,6,7,8-tetrahydrofolate + NADH + H(+) = 5-methyluridine(54) in tRNA + (6S)-5,6,7,8-tetrahydrofolate + NAD(+). It carries out the reaction uridine(54) in tRNA + (6R)-5,10-methylene-5,6,7,8-tetrahydrofolate + NADPH + H(+) = 5-methyluridine(54) in tRNA + (6S)-5,6,7,8-tetrahydrofolate + NADP(+). Its function is as follows. Catalyzes the folate-dependent formation of 5-methyl-uridine at position 54 (M-5-U54) in all tRNAs. The protein is Methylenetetrahydrofolate--tRNA-(uracil-5-)-methyltransferase TrmFO of Bacillus anthracis (strain A0248).